The sequence spans 252 residues: Thiazole synthase (252 aa).

The active-site Schiff-base intermediate with DXP is Lys-91. Residues Gly-152, 179–180, and 201–202 each bind 1-deoxy-D-xylulose 5-phosphate; these read AG and NT.

The protein belongs to the ThiG family. Homotetramer. Forms heterodimers with either ThiH or ThiS.

The protein localises to the cytoplasm. It carries out the reaction [ThiS sulfur-carrier protein]-C-terminal-Gly-aminoethanethioate + 2-iminoacetate + 1-deoxy-D-xylulose 5-phosphate = [ThiS sulfur-carrier protein]-C-terminal Gly-Gly + 2-[(2R,5Z)-2-carboxy-4-methylthiazol-5(2H)-ylidene]ethyl phosphate + 2 H2O + H(+). It functions in the pathway cofactor biosynthesis; thiamine diphosphate biosynthesis. Catalyzes the rearrangement of 1-deoxy-D-xylulose 5-phosphate (DXP) to produce the thiazole phosphate moiety of thiamine. Sulfur is provided by the thiocarboxylate moiety of the carrier protein ThiS. In vitro, sulfur can be provided by H(2)S. The polypeptide is Thiazole synthase (Gluconobacter oxydans (strain 621H) (Gluconobacter suboxydans)).